Consider the following 307-residue polypeptide: Dihydroorotate dehydrogenase B (NAD(+)), catalytic subunit (307 aa).

FMN contacts are provided by residues S21 and 45–46; that span reads KA. Residues K45 and 69–73 each bind substrate; that span reads NAIGL. Residues N101 and N129 each coordinate FMN. N129 is a binding site for substrate. C132 acts as the Nucleophile in catalysis. The FMN site is built by K167 and I193. 194-195 is a binding site for substrate; the sequence is NT. Residues G219, 245–246, and 267–268 each bind FMN; these read GG and GT.

The protein belongs to the dihydroorotate dehydrogenase family. Type 1 subfamily. As to quaternary structure, heterotetramer of 2 PyrK and 2 PyrD type B subunits. FMN is required as a cofactor.

The protein resides in the cytoplasm. The catalysed reaction is (S)-dihydroorotate + NAD(+) = orotate + NADH + H(+). It participates in pyrimidine metabolism; UMP biosynthesis via de novo pathway; orotate from (S)-dihydroorotate (NAD(+) route): step 1/1. Catalyzes the conversion of dihydroorotate to orotate with NAD(+) as electron acceptor. The sequence is that of Dihydroorotate dehydrogenase B (NAD(+)), catalytic subunit (pyrD) from Cutibacterium acnes (strain DSM 16379 / KPA171202) (Propionibacterium acnes).